Here is a 476-residue protein sequence, read N- to C-terminus: Protein transport protein Sec61 subunit alpha isoform 1 (476 aa).

Residues 2–28 (AIKFLEVIKPFCVILPEIQKPERKIQF) are Cytoplasmic-facing. Residues 29–46 (KEKVLWTAITLFIFLVCC) form a helical membrane-spanning segment. Residues 47 to 80 (QIPLFGIMSSDSADPFYWMRVILASNRGTLMELG) lie on the Lumenal side of the membrane. Residues 81–97 (ISPIVTSGLIMQLLAGA) form a helical membrane-spanning segment. At 98–109 (KIIEVGDTPKDR) the chain is on the cytoplasmic side. The chain crosses the membrane as a helical span at residues 110–131 (ALFNGAQKLFGMIITIGQSIVY). Residues 132 to 148 (VMTGMYGDPSEMGAGIC) are Lumenal-facing. A helical membrane pass occupies residues 149–167 (LLITIQLFVAGLIVLLLDE). The Cytoplasmic segment spans residues 168 to 177 (LLQKGYGLGS). The chain crosses the membrane as a helical span at residues 178-196 (GISLFIATNICETIVWKAF). The Lumenal segment spans residues 197 to 241 (SPTTVNTGRGMEFEGAIIALFHLLATRTDKVRALREAFYRQNLPN). The helical transmembrane segment at 242-259 (LMNLIATIFVFAVVIYFQ) threads the bilayer. Topologically, residues 260 to 285 (GFRVDLPIKSARYRGQYNTYPIKLFY) are cytoplasmic. The helical transmembrane segment at 286–306 (TSNIPIILQSALVSNLYVISQ) threads the bilayer. Residues 307 to 356 (MLSARFSGNLLVSLLGTWSDTSSGGPARAYPVGGLCHYLSPPESFGSVLE) lie on the Lumenal side of the membrane. Residues 357–379 (DPVHAVVYIVFMLGSCAFFSKTW) form a helical membrane-spanning segment. Residues 380 to 420 (IEVSGSSAKDVAKQLKEQQMVMRGHRETSMVHELNRYIPTA) lie on the Cytoplasmic side of the membrane. A helical membrane pass occupies residues 421–437 (AAFGGLCIGALSVLADF). The Lumenal segment spans residues 438 to 443 (LGAIGS). Residues 444-458 (GTGILLAVTIIYQYF) form a helical membrane-spanning segment. Topologically, residues 459-476 (EIFVKEQSEVGSMGALLF) are cytoplasmic.

This sequence belongs to the SecY/SEC61-alpha family. As to quaternary structure, the SEC61 channel-forming translocon complex consists of channel-forming core components SEC61A1, SEC61B and SEC61G and different auxiliary components such as SEC62 and SEC63. The SEC61 channel associates with the multi-pass translocon (MPT) complex.

Its subcellular location is the endoplasmic reticulum membrane. Its function is as follows. Component of SEC61 channel-forming translocon complex that mediates transport of signal peptide-containing precursor polypeptides across the endoplasmic reticulum (ER). Forms a ribosome receptor and a gated pore in the ER membrane, both functions required for cotranslational translocation of nascent polypeptides. May cooperate with auxiliary protein SEC62, SEC63 and HSPA5/BiP to enable post-translational transport of small presecretory proteins. The SEC61 channel is also involved in ER membrane insertion of transmembrane proteins: it mediates membrane insertion of the first few transmembrane segments of proteins, while insertion of subsequent transmembrane regions of multi-pass membrane proteins is mediated by the multi-pass translocon (MPT) complex. The SEC61 channel cooperates with the translocating protein TRAM1 to import nascent proteins into the ER. Controls the passive efflux of calcium ions from the ER lumen to the cytosol through SEC61 channel, contributing to the maintenance of cellular calcium homeostasis. Plays a critical role in nephrogenesis, specifically at pronephros stage. The polypeptide is Protein transport protein Sec61 subunit alpha isoform 1 (SEC61A1) (Canis lupus familiaris (Dog)).